The following is a 291-amino-acid chain: Methionine aminopeptidase (291 aa).

Histidine 65 serves as a coordination point for substrate. Residues aspartate 85, aspartate 96, and histidine 155 each coordinate a divalent metal cation. Residue histidine 163 participates in substrate binding. Positions 188 and 276 each coordinate a divalent metal cation.

Belongs to the peptidase M24A family. Methionine aminopeptidase archaeal type 2 subfamily. Monomer. Co(2+) serves as cofactor. It depends on Zn(2+) as a cofactor. Requires Mn(2+) as cofactor. Fe(2+) is required as a cofactor.

The enzyme catalyses Release of N-terminal amino acids, preferentially methionine, from peptides and arylamides.. In terms of biological role, removes the N-terminal methionine from nascent proteins. The N-terminal methionine is often cleaved when the second residue in the primary sequence is small and uncharged (Met-Ala-, Cys, Gly, Pro, Ser, Thr, or Val). The sequence is that of Methionine aminopeptidase from Archaeoglobus fulgidus (strain ATCC 49558 / DSM 4304 / JCM 9628 / NBRC 100126 / VC-16).